A 434-amino-acid polypeptide reads, in one-letter code: UDP-N-acetylglucosamine 1-carboxyvinyltransferase 1 (434 aa).

Phosphoenolpyruvate is bound at residue 22-23 (KN). Arginine 93 contacts UDP-N-acetyl-alpha-D-glucosamine. Catalysis depends on cysteine 117, which acts as the Proton donor. The residue at position 117 (cysteine 117) is a 2-(S-cysteinyl)pyruvic acid O-phosphothioketal. Residues 122–126 (RPIDQ), aspartate 306, and valine 328 contribute to the UDP-N-acetyl-alpha-D-glucosamine site.

This sequence belongs to the EPSP synthase family. MurA subfamily.

It localises to the cytoplasm. It catalyses the reaction phosphoenolpyruvate + UDP-N-acetyl-alpha-D-glucosamine = UDP-N-acetyl-3-O-(1-carboxyvinyl)-alpha-D-glucosamine + phosphate. It participates in cell wall biogenesis; peptidoglycan biosynthesis. Functionally, cell wall formation. Adds enolpyruvyl to UDP-N-acetylglucosamine. The protein is UDP-N-acetylglucosamine 1-carboxyvinyltransferase 1 of Bacillus cereus (strain ATCC 14579 / DSM 31 / CCUG 7414 / JCM 2152 / NBRC 15305 / NCIMB 9373 / NCTC 2599 / NRRL B-3711).